A 497-amino-acid chain; its full sequence is Guanosine-5'-triphosphate,3'-diphosphate pyrophosphatase (497 aa).

This sequence belongs to the GppA/Ppx family. GppA subfamily.

It catalyses the reaction guanosine 3'-diphosphate 5'-triphosphate + H2O = guanosine 3',5'-bis(diphosphate) + phosphate + H(+). It participates in purine metabolism; ppGpp biosynthesis; ppGpp from GTP: step 2/2. In terms of biological role, catalyzes the conversion of pppGpp to ppGpp. Guanosine pentaphosphate (pppGpp) is a cytoplasmic signaling molecule which together with ppGpp controls the 'stringent response', an adaptive process that allows bacteria to respond to amino acid starvation, resulting in the coordinated regulation of numerous cellular activities. This chain is Guanosine-5'-triphosphate,3'-diphosphate pyrophosphatase, found in Vibrio cholerae serotype O1 (strain ATCC 39541 / Classical Ogawa 395 / O395).